The primary structure comprises 339 residues: UPF0324 membrane protein SpyM3_0740 (339 aa).

Transmembrane regions (helical) follow at residues 7-24, 28-50, 57-79, 84-106, 118-140, 150-172, 256-275, 290-307, and 314-336; these read KLPG…AWYL, FPII…FYHH, GISF…GLNL, AVGM…VAYG, ATLV…APVI, AISV…GQLL, FILF…SLGV, FIVM…LVKL, and AILL…QLSL.

It belongs to the UPF0324 family.

The protein localises to the cell membrane. In Streptococcus pyogenes serotype M3 (strain ATCC BAA-595 / MGAS315), this protein is UPF0324 membrane protein SpyM3_0740.